We begin with the raw amino-acid sequence, 343 residues long: MQSPPPDPLGDCLRNWEDLQQDFQGIQETHRLYRLKLEELTKLQANCTNSITRQKKRLQELALVLKKCRPSLPSESMEAAQELENQMKERQGLFFDMEAYLPKKNGLYLSLVLGNVNVTLLSKQAKFAYKDEYEKFKLYLTIILIVISFTCRFLLNSRVTDAAFNFLLVWYYCTLTIRESILINNGSRIKGWWVFHHYVSTFLSGVMLTWPDGLMYQKFRNQFLSFSMYQSFVQFLQYYYQSGCLYRLRALGERHTMDLTVEGFQSWMWRGLTFLLPFLFFGHFWQLFNALTLFNLARDPECKEWQVLMCGFPFLLLFLGNFFTTLRVVHQKFHSQQHGNKKD.

The Cytoplasmic segment spans residues 1 to 135 (MQSPPPDPLG…KFAYKDEYEK (135 aa)). Lysine 130 contacts CoA. Residues 136–156 (FKLYLTIILIVISFTCRFLLN) form a helical membrane-spanning segment. Residues 157–162 (SRVTDA) are Extracellular-facing. A helical membrane pass occupies residues 163–183 (AFNFLLVWYYCTLTIRESILI). The Cytoplasmic segment spans residues 184-190 (NNGSRIK). 2 residues coordinate CoA: serine 187 and arginine 188. Residues 191 to 211 (GWWVFHHYVSTFLSGVMLTWP) form a helical membrane-spanning segment. Topologically, residues 212–222 (DGLMYQKFRNQ) are extracellular. A helical transmembrane segment spans residues 223–240 (FLSFSMYQSFVQFLQYYY). Glutamine 237, tyrosine 240, glutamine 241, and histidine 283 together coordinate CoA. The Cytoplasmic segment spans residues 241–273 (QSGCLYRLRALGERHTMDLTVEGFQSWMWRGLT). Residues 274 to 294 (FLLPFLFFGHFWQLFNALTLF) form a helical membrane-spanning segment. The Extracellular portion of the chain corresponds to 295-305 (NLARDPECKEW). Residues 306–326 (QVLMCGFPFLLLFLGNFFTTL) form a helical membrane-spanning segment. The Cytoplasmic portion of the chain corresponds to 327 to 343 (RVVHQKFHSQQHGNKKD). Lysine 332 lines the CoA pocket.

The protein belongs to the TMEM120 family. Homodimer. Forms heterooligomer with TMEM120B. Interacts with PKD2; TMEM120A inhibits PKD2 channel activity through the physical association of PKD2 with TMEM120A. As to expression, widely expressed, with higher expression in the heart, kidneys, colon and sensory neurons of the dorsal root ganglia. Expressed in nociceptors. Highly expressed in white adipose tissue (at protein level). Highly expressed in brown adipose tissue and expressed at low levels in liver.

Its subcellular location is the cell membrane. It is found in the nucleus envelope. The protein resides in the nucleus inner membrane. The protein localises to the endoplasmic reticulum. In terms of biological role, multifunctional protein involved in mechanosensation, and plays an essential role in lipid metabolism and adipocyte differentiation. May function as a potential ion channel involved in sensing mechanical stimuli. Mediates the mechanosensitivity of the PKD2-TMEM120A channel complex through direct physical interaction. TMEM120A seems to affect mechanosensation by inhibiting PIEZO2 channels, possibly by altering cellular lipid content. TMEM120A is structurally similar to a lipid-modifying enzyme, ELOVL7, and contains a bound coenzyme A molecule, which suggests it might function as an enzyme in lipid metabolism. The chain is Transmembrane protein 120A from Mus musculus (Mouse).